The chain runs to 302 residues: tRNA pseudouridine synthase B (302 aa).

Asp40 serves as the catalytic Nucleophile.

It belongs to the pseudouridine synthase TruB family. Type 1 subfamily.

It carries out the reaction uridine(55) in tRNA = pseudouridine(55) in tRNA. Responsible for synthesis of pseudouridine from uracil-55 in the psi GC loop of transfer RNAs. The protein is tRNA pseudouridine synthase B of Shouchella clausii (strain KSM-K16) (Alkalihalobacillus clausii).